The primary structure comprises 85 residues: ATP synthase subunit c (85 aa).

Helical transmembrane passes span 10-30 and 53-73; these read IAVALLIGLGALGTAIGFGLL and FIVAGLLDAVTMIGVGIALFF.

Belongs to the ATPase C chain family. F-type ATPases have 2 components, F(1) - the catalytic core - and F(0) - the membrane proton channel. F(1) has five subunits: alpha(3), beta(3), gamma(1), delta(1), epsilon(1). F(0) has three main subunits: a(1), b(2) and c(10-14). The alpha and beta chains form an alternating ring which encloses part of the gamma chain. F(1) is attached to F(0) by a central stalk formed by the gamma and epsilon chains, while a peripheral stalk is formed by the delta and b chains.

It localises to the cell inner membrane. Functionally, f(1)F(0) ATP synthase produces ATP from ADP in the presence of a proton or sodium gradient. F-type ATPases consist of two structural domains, F(1) containing the extramembraneous catalytic core and F(0) containing the membrane proton channel, linked together by a central stalk and a peripheral stalk. During catalysis, ATP synthesis in the catalytic domain of F(1) is coupled via a rotary mechanism of the central stalk subunits to proton translocation. Its function is as follows. Key component of the F(0) channel; it plays a direct role in translocation across the membrane. A homomeric c-ring of between 10-14 subunits forms the central stalk rotor element with the F(1) delta and epsilon subunits. This is ATP synthase subunit c from Pseudomonas aeruginosa (strain LESB58).